A 127-amino-acid chain; its full sequence is MESYVKFQTPETLEKAVLDMVENSYKTGKVRKGTNEVVKSIERGESKLVVIAEDVSPAEVVYYLPTLCEERKVPYVYVKKKSDLGLKVGIASAASVSIVDYGKNDDAYKSIVSQINDAKSGKSENKE.

Belongs to the eukaryotic ribosomal protein eL8 family. Part of the 50S ribosomal subunit. Probably part of the RNase P complex.

Its subcellular location is the cytoplasm. In terms of biological role, multifunctional RNA-binding protein that recognizes the K-turn motif in ribosomal RNA, the RNA component of RNase P, box H/ACA, box C/D and box C'/D' sRNAs. In Picrophilus torridus (strain ATCC 700027 / DSM 9790 / JCM 10055 / NBRC 100828 / KAW 2/3), this protein is Large ribosomal subunit protein eL8.